A 949-amino-acid chain; its full sequence is Multimerin-2 (949 aa).

Positions Met-1–Ala-22 are cleaved as a signal peptide. The 79-residue stretch at Gly-54 to His-132 folds into the EMI domain. 3 disulfides stabilise this stretch: Cys-58-Cys-122, Cys-85-Cys-92, and Cys-121-Cys-130. Residue Ser-63 is glycosylated (O-linked (Fuc...) serine). An O-linked (Fuc) threonine glycan is attached at Thr-67. Thr-115 is a glycosylation site (O-linked (Fuc) threonine). Residues His-133–Ser-157 form a disordered region. Residues Ile-167–Asp-187 are a coiled coil. Residues Asn-205, Asn-214, Asn-249, Asn-261, Asn-350, Asn-379, Asn-439, and Asn-472 are each glycosylated (N-linked (GlcNAc...) asparagine). Coiled-coil stretches lie at residues Lys-292–Lys-487, Val-547–Phe-596, and Glu-688–Val-711. N-linked (GlcNAc...) asparagine glycosylation is found at Asn-727 and Asn-765. The interval Arg-779–Pro-801 is disordered. Residues Gln-784–Glu-800 are compositionally biased toward basic and acidic residues. A C1q domain is found at Glu-821–Thr-949. Asn-845 is a glycosylation site (N-linked (GlcNAc...) asparagine).

As to quaternary structure, heteromer of p110, p125, p140 and p200 subunits; disulfide-linked. Interacts with VEGFA. Interacts with CD93; this interaction promotes angiogenesis. Interacts with CD248. Post-translationally, N- and O-glycosylated. In terms of processing, O-fucosylated within the EMI domain (at Ser-63, Thr-67 and Thr-115) by FUT10/POFUT3 and FUT11/POFUT4. Processed by matrix metalloproteinases (MMPs) including MMP9 and, to a lesser degree, by MMP2 upon angiogenic stimulation. In terms of tissue distribution, endothelium.

Its subcellular location is the secreted. It localises to the extracellular space. The protein resides in the extracellular matrix. Extracellular matrix protein that plays significant roles in the vascular system and is required for the maintenance and stability of blood vessel. Affects several essential steps in angiogenesis including endothelial cell proliferation, migration, and tube formation. Positively regulates angiogenesis by acting as a ligand for CD93 receptor. The polypeptide is Multimerin-2 (MMRN2) (Homo sapiens (Human)).